We begin with the raw amino-acid sequence, 354 residues long: Thiamine thiazole synthase 1, chloroplastic (354 aa).

The transit peptide at 1-43 directs the protein to the chloroplast; sequence MATTAASSLLKSSFAGSRLPSATRAPSSVVVSTGGAPRTAAIS. Residues Ala-96, 116–117, Gly-124, and Val-190 contribute to the substrate site; that span reads EQ. Residue Cys-219 is modified to 2,3-didehydroalanine (Cys). Substrate-binding positions include Asp-221, His-236, Met-288, and 298–300; that span reads RMG.

The protein belongs to the THI4 family. In terms of assembly, homooctamer. Fe cation serves as cofactor. In terms of processing, during the catalytic reaction, a sulfide is transferred from Cys-219 to a reaction intermediate, generating a dehydroalanine residue.

Its subcellular location is the plastid. It localises to the chloroplast. It catalyses the reaction [ADP-thiazole synthase]-L-cysteine + glycine + NAD(+) = [ADP-thiazole synthase]-dehydroalanine + ADP-5-ethyl-4-methylthiazole-2-carboxylate + nicotinamide + 3 H2O + 2 H(+). Functionally, involved in biosynthesis of the thiamine precursor thiazole. Catalyzes the conversion of NAD and glycine to adenosine diphosphate 5-(2-hydroxyethyl)-4-methylthiazole-2-carboxylic acid (ADT), an adenylated thiazole intermediate. The reaction includes an iron-dependent sulfide transfer from a conserved cysteine residue of the protein to a thiazole intermediate. The enzyme can only undergo a single turnover, which suggests it is a suicide enzyme. May have additional roles in adaptation to various stress conditions and in DNA damage tolerance. This is Thiamine thiazole synthase 1, chloroplastic from Sorghum bicolor (Sorghum).